The primary structure comprises 396 residues: 4-hydroxy-3-methylbut-2-en-1-yl diphosphate synthase (ferredoxin) (396 aa).

Positions 305, 308, 339, and 346 each coordinate [4Fe-4S] cluster.

It belongs to the IspG family. [4Fe-4S] cluster serves as cofactor.

The catalysed reaction is (2E)-4-hydroxy-3-methylbut-2-enyl diphosphate + 2 oxidized [2Fe-2S]-[ferredoxin] + H2O = 2-C-methyl-D-erythritol 2,4-cyclic diphosphate + 2 reduced [2Fe-2S]-[ferredoxin] + H(+). It participates in isoprenoid biosynthesis; isopentenyl diphosphate biosynthesis via DXP pathway; isopentenyl diphosphate from 1-deoxy-D-xylulose 5-phosphate: step 5/6. Functionally, converts 2C-methyl-D-erythritol 2,4-cyclodiphosphate (ME-2,4cPP) into 1-hydroxy-2-methyl-2-(E)-butenyl 4-diphosphate. The polypeptide is 4-hydroxy-3-methylbut-2-en-1-yl diphosphate synthase (ferredoxin) (Gloeobacter violaceus (strain ATCC 29082 / PCC 7421)).